We begin with the raw amino-acid sequence, 310 residues long: Lipoyl synthase (310 aa).

The [4Fe-4S] cluster site is built by C41, C46, C52, C68, C72, C75, and S281. In terms of domain architecture, Radical SAM core spans 54–270 (GERRTATFMI…RKVAMEKGFK (217 aa)). The tract at residues 285–310 (DEQVNEAAKERQRIGDEKLEAAKNEA) is disordered.

The protein belongs to the radical SAM superfamily. Lipoyl synthase family. [4Fe-4S] cluster is required as a cofactor.

It localises to the cytoplasm. The catalysed reaction is [[Fe-S] cluster scaffold protein carrying a second [4Fe-4S](2+) cluster] + N(6)-octanoyl-L-lysyl-[protein] + 2 oxidized [2Fe-2S]-[ferredoxin] + 2 S-adenosyl-L-methionine + 4 H(+) = [[Fe-S] cluster scaffold protein] + N(6)-[(R)-dihydrolipoyl]-L-lysyl-[protein] + 4 Fe(3+) + 2 hydrogen sulfide + 2 5'-deoxyadenosine + 2 L-methionine + 2 reduced [2Fe-2S]-[ferredoxin]. The protein operates within protein modification; protein lipoylation via endogenous pathway; protein N(6)-(lipoyl)lysine from octanoyl-[acyl-carrier-protein]. Its function is as follows. Catalyzes the radical-mediated insertion of two sulfur atoms into the C-6 and C-8 positions of the octanoyl moiety bound to the lipoyl domains of lipoate-dependent enzymes, thereby converting the octanoylated domains into lipoylated derivatives. This is Lipoyl synthase from Staphylococcus carnosus (strain TM300).